The sequence spans 351 residues: MQIASSPFTHNQRSTRRIMLLVILACIPGIIAQTYFFGYGSLIQVMLAMITALLAEGAVLQLRKQPVMARLQDNSALLTALLLGISLPPLAPWWMIVLGTLFAIVIAKQLYGGLGQNPFNPAMVGYVVLLISFPVQMTSWLPPLPLQGTSVGFYDSLLTIFTGYTHSGENIHQLQVGYDGISQATPLDTFKTSLRSQPADQILQQPIFGGVLAGLGWQWVNTGFLVGGLLLLWRKAIHWHIPVSFLLALGGCAAVSWMIAPQSFASPMLHLFSGATMLGAFFIATDPVSASTTPRGRLIFGALIGILVWLIRVYGGYPDSVAFAVLLANITVPLIDHYTQPRVYGHKSGHK.

Helical transmembrane passes span 18 to 38, 40 to 60, 87 to 107, and 121 to 141; these read IMLL…YFFG, GSLI…GAVL, LPPL…IVIA, and PAMV…TSWL. Threonine 185 is subject to FMN phosphoryl threonine. The next 5 helical transmembrane spans lie at 211-231, 241-261, 264-284, 298-318, and 321-341; these read VLAG…GLLL, IPVS…MIAP, FASP…FFIA, LIFG…GGYP, and VAFA…YTQP.

It belongs to the NqrB/RnfD family. In terms of assembly, the complex is composed of six subunits: RnfA, RnfB, RnfC, RnfD, RnfE and RnfG. It depends on FMN as a cofactor.

The protein resides in the cell inner membrane. Functionally, part of a membrane-bound complex that couples electron transfer with translocation of ions across the membrane. The sequence is that of Ion-translocating oxidoreductase complex subunit D from Yersinia pestis.